A 649-amino-acid chain; its full sequence is Protein teflon (649 aa).

The segment at 33 to 56 adopts a C2H2-type 1 zinc-finger fold; it reads LYCHFCRDLFTQLPEFLRHLQSNH. The interval 78 to 126 is disordered; sequence EQGKAHEDAQSAGHNSSSGDSSSLMNSEDSRAIEGSEDNSDNSPMKPEQ. Residues 88–104 show a composition bias toward low complexity; sequence SAGHNSSSGDSSSLMNS. C2H2-type zinc fingers lie at residues 599 to 621 and 625 to 648; these read YFCK…LISH and FQCT…RNAH.

Belongs to the Teflon family. Expressed at a low level in a variety of tissues, highest expression is in testis.

The protein localises to the nucleus. Its subcellular location is the chromosome. In terms of biological role, specifically required in males for proper segregation of autosomal bivalents at meiosis I. Expression is required in the male germ line prior to spermatocyte stage S4. May have a role as a bridging molecule maintaining adhesion to hold autosome bivalents together via heterochromatic connections. This Drosophila melanogaster (Fruit fly) protein is Protein teflon.